The sequence spans 395 residues: Digeranylgeranylglycerophospholipid reductase (395 aa).

FAD contacts are provided by alanine 15, aspartate 34, cysteine 45, alanine 46, glycine 48, arginine 97, alanine 121, aspartate 276, and glycine 288. A 2,3-bis-O-(geranylgeranyl)-sn-glycerol 1-phospholipid contacts are provided by arginine 329 and glycine 365.

It belongs to the geranylgeranyl reductase family. DGGGPL reductase subfamily. FAD is required as a cofactor.

It catalyses the reaction a 2,3-bis-O-phytanyl-sn-glycerol 1-phospholipid + 8 A = a 2,3-bis-O-(geranylgeranyl)-sn-glycerol 1-phospholipid + 8 AH2. The catalysed reaction is 2,3-bis-O-(phytanyl)-sn-glycerol 1-phosphate + 8 A = 2,3-bis-O-(geranylgeranyl)-sn-glycerol 1-phosphate + 8 AH2. The enzyme catalyses CDP-2,3-bis-O-(geranylgeranyl)-sn-glycerol + 8 AH2 = CDP-2,3-bis-O-(phytanyl)-sn-glycerol + 8 A. It carries out the reaction archaetidylserine + 8 AH2 = 2,3-bis-O-phytanyl-sn-glycero-3-phospho-L-serine + 8 A. The protein operates within membrane lipid metabolism; glycerophospholipid metabolism. In terms of biological role, is involved in the reduction of 2,3-digeranylgeranylglycerophospholipids (unsaturated archaeols) into 2,3-diphytanylglycerophospholipids (saturated archaeols) in the biosynthesis of archaeal membrane lipids. Catalyzes the formation of archaetidic acid (2,3-di-O-phytanyl-sn-glyceryl phosphate) from 2,3-di-O-geranylgeranylglyceryl phosphate (DGGGP) via the hydrogenation of each double bond of the isoprenoid chains. Is also probably able to reduce double bonds of geranyl groups in CDP-2,3-bis-O-(geranylgeranyl)-sn-glycerol and archaetidylserine, thus acting at various stages in the biosynthesis of archaeal membrane lipids. In Thermococcus gammatolerans (strain DSM 15229 / JCM 11827 / EJ3), this protein is Digeranylgeranylglycerophospholipid reductase.